A 112-amino-acid chain; its full sequence is uncharacterized protein (112 aa).

A run of 3 helical transmembrane segments spans residues 33–53 (PSPL…PFGA), 58–78 (LYIY…NVCT), and 91–111 (CVYV…LLFV).

The protein resides in the membrane. This is an uncharacterized protein from Saccharomyces cerevisiae (strain ATCC 204508 / S288c) (Baker's yeast).